The following is a 414-amino-acid chain: Probable uracil permease (414 aa).

The Cytoplasmic segment spans residues 1-14 (MTNQIPPSLAENQS). A helical transmembrane segment spans residues 15–38 (KLKQSFVGLQMLFVAFGALVLVPL). The Periplasmic portion of the chain corresponds to 39–42 (ITGL). Residues 43-62 (DSNTALLTAGVGTLLFQFCT) form a helical membrane-spanning segment. At 63-65 (GKQ) the chain is on the cytoplasmic side. A discontinuously helical membrane pass occupies residues 66–82 (VPIFLASSFAFIAPIQY). Phenylalanine 74 is a binding site for uracil. Over 83 to 91 (GVQTWGIAT) the chain is Periplasmic. The chain crosses the membrane as a helical span at residues 92–112 (TMGGLAFTGLVYFALSTLVKL). Residues 113–124 (RGAEALQRFFPP) lie on the Cytoplasmic side of the membrane. The helical transmembrane segment at 125 to 146 (VVVGPVIIIIGMGLAPIAVDMS) threads the bilayer. Over 147–155 (LGKNSAYAY) the chain is Periplasmic. A helical membrane pass occupies residues 156–171 (NDAVLVSMVTLLTTLS). Over 172–178 (VAVFAKG) the chain is Cytoplasmic. Residues 179–199 (LMKLIPIMFGITAGYILCLFL) traverse the membrane as a helical segment. The Periplasmic segment spans residues 200–224 (GLINFQPVIDAPWFSLPKLTTPEFN). The helical transmembrane segment at 225–248 (LEAILYMLPIAIAPAVEHVGGIMA) threads the bilayer. Glutamate 241 is a binding site for uracil. At 249–261 (ISSVTGKDFLKKP) the chain is on the cytoplasmic side. Residues 262 to 281 (GLHRTLLGDGIATAAASLVG) traverse the membrane as a helical segment. A discontinuously helical membrane pass occupies residues 282–298 (GPPNTTYAEVTGAVMLT). Glutamate 290 contributes to the uracil binding site. The Cytoplasmic segment spans residues 299–301 (RNF). A helical transmembrane segment spans residues 302 to 319 (NPNIMTWAAVWAIAISFC). Over 320-332 (GKVGAFLSTIPTI) the chain is Periplasmic. A helical membrane pass occupies residues 333–354 (VMGGIMMLVFGSIAVVGMSTLI). The Cytoplasmic portion of the chain corresponds to 355-365 (RGKVDVTEARN). Positions 366-401 (LCIISVVMTFGIGNMFVDVGNVSLKGISLCAIVAII) form an intramembrane region, discontinuously helical. Over 402–414 (LNLVLPKAKNEVE) the chain is Cytoplasmic.

The protein belongs to the nucleobase:cation symporter-2 (NCS2) (TC 2.A.40) family.

It is found in the cell inner membrane. It catalyses the reaction uracil(in) + H(+)(in) = uracil(out) + H(+)(out). Transport of uracil in the cell. This is Probable uracil permease (uraA) from Haemophilus influenzae (strain ATCC 51907 / DSM 11121 / KW20 / Rd).